The sequence spans 169 residues: Phosphopantetheine adenylyltransferase (169 aa).

Thr-13 contacts substrate. ATP-binding positions include 13-14 (TF) and His-21. 3 residues coordinate substrate: Lys-45, Leu-82, and Arg-96. Residues 97–99 (GLR), Glu-107, and 132–138 (HQFISSR) each bind ATP.

The protein belongs to the bacterial CoaD family. Homohexamer. Mg(2+) serves as cofactor.

The protein resides in the cytoplasm. It catalyses the reaction (R)-4'-phosphopantetheine + ATP + H(+) = 3'-dephospho-CoA + diphosphate. Its pathway is cofactor biosynthesis; coenzyme A biosynthesis; CoA from (R)-pantothenate: step 4/5. Its function is as follows. Reversibly transfers an adenylyl group from ATP to 4'-phosphopantetheine, yielding dephospho-CoA (dPCoA) and pyrophosphate. The sequence is that of Phosphopantetheine adenylyltransferase from Acidiphilium cryptum (strain JF-5).